The primary structure comprises 290 residues: 33 kDa chaperonin (290 aa).

Cystine bridges form between Cys-235-Cys-237 and Cys-268-Cys-271.

This sequence belongs to the HSP33 family. Post-translationally, under oxidizing conditions two disulfide bonds are formed involving the reactive cysteines. Under reducing conditions zinc is bound to the reactive cysteines and the protein is inactive.

Its subcellular location is the cytoplasm. Redox regulated molecular chaperone. Protects both thermally unfolding and oxidatively damaged proteins from irreversible aggregation. Plays an important role in the bacterial defense system toward oxidative stress. The protein is 33 kDa chaperonin of Streptococcus sanguinis (strain SK36).